The primary structure comprises 1029 residues: Protein phosphatase 1 regulatory subunit 12A (1029 aa).

The KVKF motif motif lies at 35 to 38; the sequence is KVKF. ANK repeat units lie at residues 39 to 68, 72 to 101, 105 to 134, 138 to 164, 198 to 227, and 231 to 260; these read DDGA…DINY, DGLT…NINQ, EGWI…HVGA, EGDT…RQGV, SGGT…DVNI, and DGWT…DMET. (3S)-3-hydroxyasparagine; by HIF1AN is present on residues N67 and N100. N226 carries the post-translational modification (3S)-3-hydroxyasparagine; by HIF1AN. The tract at residues 290–786 is disordered; the sequence is LHSEKRDKKS…APSSSSLSTL (497 aa). Residues 291 to 300 show a composition bias toward basic and acidic residues; it reads HSEKRDKKSP. Position 299 is a phosphoserine (S299). Residues 302–314 show a composition bias toward polar residues; it reads IESTANMENNQPQ. The segment covering 318-353 has biased composition (basic and acidic residues); the sequence is KNKETLIIEPEKNASRIESLEHEKADEEEEGKKDES. The segment covering 357–369 has biased composition (acidic residues); it reads SEEDEEDDSESEA. Residues 385–402 are compositionally biased toward low complexity; it reads TSSTQAAPAAVTAPTLSS. Phosphoserine occurs at positions 422 and 432. Basic and acidic residues predominate over residues 422 to 432; sequence SPKEEERKDES. Residue T443 is modified to Phosphothreonine. Position 445 is a phosphoserine; by NUAK1 (S445). Phosphotyrosine is present on Y446. Low complexity predominate over residues 469–480; sequence RSASSPRLSSSL. The residue at position 472 (S472) is a Phosphoserine; by NUAK1. S473 carries the post-translational modification Phosphoserine; by CDK1. Position 477 is a phosphoserine (S477). A compositionally biased stretch (basic and acidic residues) spans 481–491; that stretch reads DNKEKEKDNKG. A phosphoserine mark is found at S507 and S509. Residues 540 to 551 are compositionally biased toward polar residues; it reads NSSINEGSTYHR. Low complexity predominate over residues 564–578; it reads SCSVPSTTSTPTVTS. Polar residues predominate over residues 585–594; the sequence is SLPSSTSTAA. The segment covering 596-610 has biased composition (low complexity); it reads TPPGSSSAGTQSSTS. A phosphoserine mark is found at S601 and S618. The segment covering 614–625 has biased composition (basic and acidic residues); it reads WAEDSTEKEKDS. The span at 626–656 shows a compositional bias: low complexity; it reads APTAVTIPVAPTVVNAAAPSTTTLTTTTAGT. The segment covering 671–680 has biased composition (basic and acidic residues); sequence VRDEESESQR. The interval 680-863 is interaction with ROCK2; it reads RKARSRQARQ…VSFWTQDSDE (184 aa). Residues 681–691 are compositionally biased toward basic residues; that stretch reads KARSRQARQSR. S690 and S693 each carry phosphoserine; by PKA and PKG; in vitro. A Phosphothreonine; by ROCK1, ROCK2, CDC42BP, ZIPK/DAPK3 and RAF1 modification is found at T694. The segment covering 716 to 765 has biased composition (basic and acidic residues); the sequence is RTREQENEEKEKEEKEKQDKEKQEEKKESEASREDEYKQKYSRTYDETYT. A compositionally biased stretch (low complexity) spans 771–786; the sequence is STSSSSAPSSSSLSTL. S801 is subject to Phosphoserine. A disordered region spans residues 808-927; that stretch reads AYSRGLAKEN…PYSSRLEKDD (120 aa). Basic and acidic residues predominate over residues 813-839; it reads LAKENEREGEKKEEEKEGEDKSQPKSI. The span at 840–851 shows a compositional bias: basic residues; it reads RERRRPREKRRS. Phosphoserine; by ROCK2 is present on S851. Phosphoserine is present on residues S861 and S870. Positions 866 to 882 are enriched in basic and acidic residues; the sequence is QERQSDTEDGSSKRETQ. Positions 883 to 897 are enriched in low complexity; sequence TDSVSRYDSSSTSSS. A phosphoserine mark is found at S902 and S907. Position 909 is a phosphoserine; by NUAK1 (S909). Over residues 913 to 927 the composition is skewed to basic and acidic residues; it reads LEDRKPYSSRLEKDD. S994 carries the phosphoserine modification.

In terms of assembly, PP1 comprises a catalytic subunit, PPP1CA, PPP1CB or PPP1CC, and one or several targeting or regulatory subunits. PPP1R12A mediates binding to myosin. Interacts with ARHA and CIT. Binds PPP1R12B, ROCK1 and IL16. Interacts directly with PRKG1. Non-covalent dimer of 2 dimers; PRKG1-PRKG1 and PPP1R12A-PPP1R12A. Interacts with SMTNL1. Interacts with PPP1CB; the interaction is direct. Interacts (when phosphorylated at Ser-445, Ser-472 and Ser-910) with 14-3-3. Interacts with ROCK1 and ROCK2. Interacts with isoform 1 and isoform 2 of ZIPK/DAPK3. Interacts with RAF1. Interacts with HIF1AN. Interacts with NCKAP1L. In terms of processing, phosphorylated by CIT (Rho-associated kinase). Phosphorylated cooperatively by ROCK1 and CDC42BP on Thr-694. Phosphorylated on upon DNA damage, probably by ATM or ATR. In vitro, phosphorylation of Ser-693 by PKA and PKG appears to prevent phosphorylation of the inhibitory site Thr-694, probably mediated by PRKG1. Phosphorylation at Ser-445, Ser-472 and Ser-909 by NUAK1 promotes interaction with 14-3-3, leading to inhibit interaction with myosin light chain MLC2, preventing dephosphorylation of MLC2. May be phosphorylated at Thr-694 by DMPK; may inhibit the myosin phosphatase activity. Phosphorylated at Ser-473 by CDK1 during mitosis, creating docking sites for the POLO box domains of PLK1. Subsequently, PLK1 binds and phosphorylates PPP1R12A. Expressed in striated and vascular smooth muscle, specificcally in type 2a fibers (at protein level). Expression levels are 20-30% higher in developed males than females (at protein level).

Its subcellular location is the cytoplasm. It localises to the cytoskeleton. The protein localises to the stress fiber. Key regulator of protein phosphatase 1C (PPP1C). Mediates binding to myosin. As part of the PPP1C complex, involved in dephosphorylation of PLK1. Capable of inhibiting HIF1AN-dependent suppression of HIF1A activity. This is Protein phosphatase 1 regulatory subunit 12A from Mus musculus (Mouse).